Reading from the N-terminus, the 775-residue chain is Acylamino-acid-releasing enzyme 1 (775 aa).

Catalysis depends on charge relay system residues Ser627, Asp718, and His750.

Belongs to the peptidase S9C family. As to quaternary structure, homotetramer.

The protein resides in the cytoplasm. The enzyme catalyses Cleavage of an N-acetyl or N-formyl amino acid from the N-terminus of a polypeptide.. Catalyzes the hydrolysis of the N-terminal peptide bond of an N-acetylated peptide to generate an N-acetylated amino acid and a peptide with a free N-terminus. This is Acylamino-acid-releasing enzyme 1 from Oryza sativa subsp. japonica (Rice).